Consider the following 562-residue polypeptide: Pentatricopeptide repeat-containing protein At3g22670, mitochondrial (562 aa).

Residues 1 to 31 constitute a mitochondrion transit peptide; that stretch reads MLTKLRISKLVSYTLPRRIFQRRFLVTNNTA. 10 PPR repeats span residues 165 to 199, 202 to 232, 238 to 268, 272 to 306, 307 to 341, 342 to 376, 377 to 411, 412 to 446, 450 to 484, and 485 to 519; these read SGHT…EESK, TLDT…MEKS, DTIA…LFDT, DART…EFTP, DVVT…GCNP, NVVT…GCVP, DAKF…GVRR, DVLV…EGES, NVET…DVSI, and DVST…GMVP.

This sequence belongs to the PPR family. P subfamily.

The protein localises to the mitochondrion. The protein is Pentatricopeptide repeat-containing protein At3g22670, mitochondrial of Arabidopsis thaliana (Mouse-ear cress).